The sequence spans 272 residues: 1,4-dihydroxy-2-naphthoyl-CoA synthase (272 aa).

Residues R33, S72–Q76, Y84, Y116–G120, T142, S148, Y245, and K260 contribute to the substrate site. Residue Q141 to G143 participates in hydrogencarbonate binding. Basic and acidic residues predominate over residues G253–D264. The disordered stretch occupies residues G253 to P272.

This sequence belongs to the enoyl-CoA hydratase/isomerase family. MenB subfamily. It depends on hydrogencarbonate as a cofactor.

It catalyses the reaction 2-succinylbenzoyl-CoA + H(+) = 1,4-dihydroxy-2-naphthoyl-CoA + H2O. Its pathway is quinol/quinone metabolism; 1,4-dihydroxy-2-naphthoate biosynthesis; 1,4-dihydroxy-2-naphthoate from chorismate: step 6/7. It functions in the pathway quinol/quinone metabolism; menaquinone biosynthesis. Converts o-succinylbenzoyl-CoA (OSB-CoA) to 1,4-dihydroxy-2-naphthoyl-CoA (DHNA-CoA). The sequence is that of 1,4-dihydroxy-2-naphthoyl-CoA synthase from Staphylococcus saprophyticus subsp. saprophyticus (strain ATCC 15305 / DSM 20229 / NCIMB 8711 / NCTC 7292 / S-41).